We begin with the raw amino-acid sequence, 216 residues long: UPF0323 lipoprotein HPG27_212 (216 aa).

Residues 1-27 form the signal peptide; that stretch reads MKKPYRKISDYAIVGGLSALVMVSIVG. The N-palmitoyl cysteine moiety is linked to residue Cys-28. Cys-28 is lipidated: S-diacylglycerol cysteine. A compositionally biased stretch (polar residues) spans 159–170; sequence QRTYKSPQAYQR. Residues 159 to 216 are disordered; sequence QRTYKSPQAYQRSQNSFSKSAPSASSMGGASKGQSGFFGSSRPTSSPAVSSGTRGFNS. Positions 171–209 are enriched in low complexity; that stretch reads SQNSFSKSAPSASSMGGASKGQSGFFGSSRPTSSPAVSS.

The protein belongs to the UPF0323 family.

It localises to the cell membrane. The sequence is that of UPF0323 lipoprotein HPG27_212 from Helicobacter pylori (strain G27).